The primary structure comprises 187 residues: MKLIVGLGNPGDKYKFTRHNVGFLVIDLICQKLKITLDKEKTHGSYAKFEDFIIAKPNTYMNLSGNFVLELANFFKIAPDDILVIHDEKDFELGKSAIKIGGSGGSHNGVLDVINKLNTQNFKRLKIGIGQNQEMALKDYVLQRFSLEEFSVLEPVLNQAADVCIQYSFNDIHYLMNKYNQKKKNGN.

Tyr14 lines the tRNA pocket. His19 acts as the Proton acceptor in catalysis. Residues Tyr60, Asn62, and Asn108 each coordinate tRNA.

This sequence belongs to the PTH family. As to quaternary structure, monomer.

Its subcellular location is the cytoplasm. The enzyme catalyses an N-acyl-L-alpha-aminoacyl-tRNA + H2O = an N-acyl-L-amino acid + a tRNA + H(+). In terms of biological role, hydrolyzes ribosome-free peptidyl-tRNAs (with 1 or more amino acids incorporated), which drop off the ribosome during protein synthesis, or as a result of ribosome stalling. Catalyzes the release of premature peptidyl moieties from peptidyl-tRNA molecules trapped in stalled 50S ribosomal subunits, and thus maintains levels of free tRNAs and 50S ribosomes. The protein is Peptidyl-tRNA hydrolase of Mycoplasmopsis synoviae (strain 53) (Mycoplasma synoviae).